Consider the following 541-residue polypeptide: CRISPR-associated exonuclease Cas4/endonuclease Cas1 fusion (541 aa).

A CRISPR-associated exonuclease Cas4 region spans residues 1 to 179; it reads MGIHSLLYCE…NCSLAPVCLP (179 aa). Cys9 serves as a coordination point for [4Fe-4S] cluster. Residues Asp65 and Glu78 each coordinate Mn(2+). The [4Fe-4S] cluster site is built by Cys168, Cys171, and Cys177. The tract at residues 204–541 is CRISPR-associated endonuclease Cas1; that stretch reads TLHVFGHDSR…ANIFAQARLR (338 aa). 3 residues coordinate Mn(2+): Glu365, His433, and Glu448.

The protein in the N-terminal section; belongs to the CRISPR-associated exonuclease Cas4 family. In the C-terminal section; belongs to the CRISPR-associated endonuclease Cas1 family. In terms of assembly, homodimer, forms a heterotetramer with a Cas2 homodimer. Requires [4Fe-4S] cluster as cofactor. It depends on Mg(2+) as a cofactor. Mn(2+) is required as a cofactor.

The catalysed reaction is exonucleolytic cleavage in the 5'- to 3'-direction to yield nucleoside 3'-phosphates.. In terms of biological role, CRISPR (clustered regularly interspaced short palindromic repeat), is an adaptive immune system that provides protection against mobile genetic elements (viruses, transposable elements and conjugative plasmids). CRISPR clusters contain spacers, sequences complementary to antecedent mobile elements, and target invading nucleic acids. CRISPR clusters are transcribed and processed into CRISPR RNA (crRNA). The Cas4 region acts as a ssDNA exonuclease, while the Cas1 region acts as a dsDNA endonuclease. Involved in the integration of spacer DNA into the CRISPR cassette. The chain is CRISPR-associated exonuclease Cas4/endonuclease Cas1 fusion (cas4-cas1) from Leptospira interrogans serogroup Icterohaemorrhagiae serovar Lai (strain 56601).